We begin with the raw amino-acid sequence, 613 residues long: DNA repair and telomere maintenance protein nbs1 (613 aa).

Residues 23 to 86 enclose the FHA domain; the sequence is YIVGRNVSDD…FGTKVNEKVV (64 aa). 2 consecutive BRCT domains span residues 107–186 and 228–302; these read FTIN…YLST and GFSC…KIII. A Phosphoserine modification is found at Ser-355. Disordered regions lie at residues 381-428 and 546-613; these read KEPE…GQGK and TEVF…KFHF. A compositionally biased stretch (polar residues) spans 387-399; the sequence is LSNQSNNGSAQNK. Over residues 400 to 409 the composition is skewed to basic and acidic residues; the sequence is KSGDNSEKTK. Residues 574–592 show a composition bias toward low complexity; the sequence is SSDKSGKSSISKKSSNSFK. The FxF/Y motif signature appears at 611–613; that stretch reads FHF.

It belongs to the Nibrin family. Component of the MRN complex composed of two heterodimers rad32 and rad50 associated with a single nbs1. Interacts with (phosphorylated) ctp1/CtIP. Interacts (via FxF/Y motif) with tel1/atm.

The protein localises to the nucleus. Its subcellular location is the chromosome. It localises to the telomere. Component of the MRN complex, which plays a central role in double-strand break (DSB) repair, DNA recombination, maintenance of telomere integrity and meiosis. The MRN complex is involved in the repair of DNA double-strand breaks (DSBs) via homologous recombination (HR), an error-free mechanism which primarily occurs during S and G2 phases. The complex (1) mediates the end resection of damaged DNA, which generates proper single-stranded DNA, a key initial steps in HR, and is (2) required for the recruitment of other repair factors and efficient activation of tel1/atm upon DNA damage. The MRN complex possesses single-strand endonuclease activity and double-strand-specific 3'-5' exonuclease activity, which are provided by MRE11, to initiate end resection, which is required for single-strand invasion and recombination. Within the MRN complex, nbs1 acts as a protein-protein adapter, which specifically recognizes and binds phosphorylated proteins, promoting their recruitment to DNA damage sites. Recruits rad32 and rad50 components of the MRN complex to DSBs in response to DNA damage. Promotes the recruitment of tel1/atm to the DNA damage sites, activating tel1/atm function. Mediates the recruitment of phosphorylated ctp1/CtIP to DSBs, leading to cooperation between the MRN complex and ctp1/CtIP to initiate end resection. The polypeptide is DNA repair and telomere maintenance protein nbs1 (Schizosaccharomyces pombe (strain 972 / ATCC 24843) (Fission yeast)).